A 70-amino-acid polypeptide reads, in one-letter code: Melittin (70 aa).

Residues M1 to A21 form the signal peptide. Residues A22–A43 constitute a propeptide, removed by a dipeptidylpeptidase. At G44 the chain carries N-formylglycine; partial. Q69 is modified (glutamine amide).

The protein belongs to the melittin family. As to quaternary structure, monomer (in solution and for integration into membranes), homotetramer (in solution and potentially as a toroidal pore in membranes), and potenially homomultimer (as a toroidal pore in membranes). In terms of tissue distribution, expressed by the venom gland.

It localises to the secreted. Its subcellular location is the target cell membrane. In terms of biological role, melittin: Main toxin of bee venom with strong antimicrobial activity and hemolytic activity. It has enhancing effects on bee venom phospholipase A2 activity. This amphipathic toxin binds to negatively charged membrane surface and forms pore by inserting into lipid bilayers inducing the leakage of ions and molecules and the enhancement of permeability that ultimately leads to cell lysis. It acts as a voltage-gated pore with higher selectivity for anions over cations. The ion conductance has been shown to be voltage-dependent. Self-association of melittin in membranes is promoted by high ionic strength, but not by the presence of negatively charged lipids. In vivo, intradermal injection into healthy human volunteers produce sharp pain sensation and an inflammatory response. It produces pain by activating primary nociceptor cells directly and indirectly due to its ability to activate plasma membrane phospholipase A2 and its pore-forming activity. In the context of inflammation and cancer tests, is highly cytotoxic to normal cells, highly induces calcium signaling and almost completely prevents cAMP production. In addition, prevents LPS-induced nitric oxid (NO) synthesis but does not affect the IP3 signaling and pro-inflammatory activation of endothelial cells. Also shows significant antiproliferative activity on the breast cancer cell line MDA-MB-231. Its function is as follows. Melittin-S: 1.4-fold less hemolytic and adopts a less organized secondary structure than melittin. Melittin-2: Has strong hemolytic activity. This Apis mellifera (Honeybee) protein is Melittin (MELT).